The sequence spans 474 residues: Dol-P-Glc:Glc(2)Man(9)GlcNAc(2)-PP-Dol alpha-1,2-glucosyltransferase (474 aa).

The Cytoplasmic portion of the chain corresponds to 1-6 (MAQLEG). Residues 7–27 (YYFSAALSCTFLVSCLLFSAF) traverse the membrane as a helical segment. The Extracellular portion of the chain corresponds to 28-64 (SRALREPYMDEIFHLPQAQRYCEGRFSLSQWDPMITT). The chain crosses the membrane as a helical span at residues 65 to 85 (LPGLYLVSVGVVKPASWILGW). Residues 86 to 97 (SEHVVCSIGMLR) are Cytoplasmic-facing. The chain crosses the membrane as a helical span at residues 98–118 (FVNLLFSVGNFYLLYLLFRKI). At 119 to 126 (QPRNKASS) the chain is on the extracellular side. Residues 127–147 (SIQRILSTLTLAVFPTLYFFN) traverse the membrane as a helical segment. At 148-150 (FLY) the chain is on the cytoplasmic side. Residues 151 to 171 (YTEAGSVFFTLFAYLMCLYGN) form a helical membrane-spanning segment. Residues 172 to 175 (HRTS) lie on the Extracellular side of the membrane. The chain crosses the membrane as a helical span at residues 176–196 (ALLGFCGFMFRQTNIIWAAFC). Residues 197–256 (AGHIIAQKCSEAWKTELQKKKEERLPPAKGPLSELRRVLQFLLMYSMSLKNLSMLFLLTW) are Cytoplasmic-facing. The chain crosses the membrane as a helical span at residues 257–277 (PYMLLLLAFFVFVVVNGGIVV). Residues 278 to 283 (GDRSSH) are Extracellular-facing. A helical transmembrane segment spans residues 284–304 (EACLHFPQLFYFFSFTAFFSF). Topologically, residues 305–317 (PHLLSPTKVKTFL) are cytoplasmic. Residues 318–338 (SLVWKRRVQFSVITLVSVFLV) form a helical membrane-spanning segment. The Extracellular portion of the chain corresponds to 339-365 (WKFTYVHKYLLADNRHYTFYVWKRVFQ). A helical membrane pass occupies residues 366 to 386 (RHEIVKYLLVPAYMFAGWAVA). Topologically, residues 387–392 (DSLKSK) are cytoplasmic. A helical transmembrane segment spans residues 393–413 (SIFWNLMFFVCLVASTVPQKL). Over 414 to 436 (LEFRYFILPYIIYRLNMPLPPIS) the chain is Extracellular. Residues 437–457 (RLVCELGCYAVVNFLTFYIFL) form a helical membrane-spanning segment. Residues 458-473 (NKTFQWSDSHDIQRFM) lie on the Cytoplasmic side of the membrane.

It belongs to the ALG10 glucosyltransferase family. In terms of assembly, interacts with KCNH1; may regulate KCNH1, possibly by regulating its N-glycosylation. Interacts with KCNH2; may reduce KCNH2 sensitivity to classic proarrhythmic drug blockade, possibly by regulating its N-glycosylation. In terms of tissue distribution, highly expressed in brain, skeletal muscle, uterus, small intestine and liver. Moderately expressed in lung and kidney. Weakly expressed in heart and stomach.

It localises to the endoplasmic reticulum membrane. It carries out the reaction an alpha-D-Glc-(1-&gt;3)-alpha-D-Glc-(1-&gt;3)-alpha-D-Man-(1-&gt;2)-alpha-D-Man-(1-&gt;2)-alpha-D-Man-(1-&gt;3)-[alpha-D-Man-(1-&gt;2)-alpha-D-Man-(1-&gt;3)-[alpha-D-Man-(1-&gt;2)-alpha-D-Man-(1-&gt;6)]-alpha-D-Man-(1-&gt;6)]-beta-D-Man-(1-&gt;4)-beta-D-GlcNAc-(1-&gt;4)-alpha-D-GlcNAc-diphospho-di-trans,poly-cis-dolichol + a di-trans,poly-cis-dolichyl beta-D-glucosyl phosphate = a alpha-D-Glc-(1-&gt;2)-alpha-D-Glc-(1-&gt;3)-alpha-D-Glc-(1-&gt;3)-alpha-D-Man-(1-&gt;2)-alpha-D-Man-(1-&gt;2)-alpha-D-Man-(1-&gt;3)-[alpha-D-Man-(1-&gt;2)-alpha-D-Man-(1-&gt;3)-[alpha-D-Man-(1-&gt;2)-alpha-D-Man-(1-&gt;6)]-alpha-D-Man-(1-&gt;6)]-beta-D-Man-(1-&gt;4)-beta-D-GlcNAc-(1-&gt;4)-alpha-D-GlcNAc-diphospho-di-trans,poly-cis-dolichol + a di-trans,poly-cis-dolichyl phosphate + H(+). It participates in protein modification; protein glycosylation. In terms of biological role, dol-P-Glc:Glc(2)Man(9)GlcNAc(2)-PP-Dol alpha-1,2-glucosyltransferase that operates in the biosynthetic pathway of dolichol-linked oligosaccharides, the glycan precursors employed in protein asparagine (N)-glycosylation. The assembly of dolichol-linked oligosaccharides begins on the cytosolic side of the endoplasmic reticulum membrane and finishes in its lumen. The sequential addition of sugars to dolichol pyrophosphate produces dolichol-linked oligosaccharides containing fourteen sugars, including two GlcNAcs, nine mannoses and three glucoses. Once assembled, the oligosaccharide is transferred from the lipid to nascent proteins by oligosaccharyltransferases. In the lumen of the endoplasmic reticulum, adds the third and last glucose residue from dolichyl phosphate glucose (Dol-P-Glc) onto the lipid-linked oligosaccharide intermediate Glc(2)Man(9)GlcNAc(2)-PP-Dol to produce Glc(3)Man(9)GlcNAc(2)-PP-Dol. This is Dol-P-Glc:Glc(2)Man(9)GlcNAc(2)-PP-Dol alpha-1,2-glucosyltransferase from Rattus norvegicus (Rat).